We begin with the raw amino-acid sequence, 68 residues long: Large ribosomal subunit protein bL33c (68 aa).

The protein belongs to the bacterial ribosomal protein bL33 family.

Its subcellular location is the plastid. It is found in the chloroplast. This is Large ribosomal subunit protein bL33c from Pinus koraiensis (Korean pine).